Consider the following 502-residue polypeptide: Histidine--tRNA ligase (502 aa).

The protein belongs to the class-II aminoacyl-tRNA synthetase family. In terms of assembly, homodimer.

The protein resides in the cytoplasm. It carries out the reaction tRNA(His) + L-histidine + ATP = L-histidyl-tRNA(His) + AMP + diphosphate + H(+). The protein is Histidine--tRNA ligase of Brucella ovis (strain ATCC 25840 / 63/290 / NCTC 10512).